The following is a 338-amino-acid chain: Ketol-acid reductoisomerase (NADP(+)) (338 aa).

The KARI N-terminal Rossmann domain occupies 1–181 (MQVYYDKDCD…GGGRSGIIET (181 aa)). NADP(+)-binding positions include 24–27 (YGSQ), Arg-47, Ser-50, Ser-52, and 82–85 (DEFQ). His-107 is a catalytic residue. Gly-133 lines the NADP(+) pocket. The KARI C-terminal knotted domain maps to 182 to 327 (TFKDETETDL…GKLRAMMPWI (146 aa)). Asp-190, Glu-194, Glu-226, and Glu-230 together coordinate Mg(2+). Ser-251 is a substrate binding site.

The protein belongs to the ketol-acid reductoisomerase family. It depends on Mg(2+) as a cofactor.

It carries out the reaction (2R)-2,3-dihydroxy-3-methylbutanoate + NADP(+) = (2S)-2-acetolactate + NADPH + H(+). The catalysed reaction is (2R,3R)-2,3-dihydroxy-3-methylpentanoate + NADP(+) = (S)-2-ethyl-2-hydroxy-3-oxobutanoate + NADPH + H(+). It functions in the pathway amino-acid biosynthesis; L-isoleucine biosynthesis; L-isoleucine from 2-oxobutanoate: step 2/4. The protein operates within amino-acid biosynthesis; L-valine biosynthesis; L-valine from pyruvate: step 2/4. In terms of biological role, involved in the biosynthesis of branched-chain amino acids (BCAA). Catalyzes an alkyl-migration followed by a ketol-acid reduction of (S)-2-acetolactate (S2AL) to yield (R)-2,3-dihydroxy-isovalerate. In the isomerase reaction, S2AL is rearranged via a Mg-dependent methyl migration to produce 3-hydroxy-3-methyl-2-ketobutyrate (HMKB). In the reductase reaction, this 2-ketoacid undergoes a metal-dependent reduction by NADPH to yield (R)-2,3-dihydroxy-isovalerate. The sequence is that of Ketol-acid reductoisomerase (NADP(+)) from Saccharophagus degradans (strain 2-40 / ATCC 43961 / DSM 17024).